Here is a 132-residue protein sequence, read N- to C-terminus: Phosphomevalonate dehydratase small subunit (132 aa).

S58 serves as the catalytic Proton acceptor.

It belongs to the AcnX type II small subunit family. As to quaternary structure, heterodimer composed of a large subunit (PMDh-L) and a small subunit (PMDh-S).

It catalyses the reaction (R)-5-phosphomevalonate = (2E)-3-methyl-5-phosphooxypent-2-enoate + H2O. The protein operates within isoprenoid biosynthesis; isopentenyl diphosphate biosynthesis via mevalonate pathway. Neither the addition of 1 mM Mg(2+) nor 1 mM Mn(2+) has a significant effect on the activity, whereas Zn(2+) causes almost complete inactivation. Strongly inhibited by H(2)O(2), but not by EDTA or iodoacetamide. Component of a hydro-lyase that catalyzes the dehydration of mevalonate 5-phosphate (MVA5P) to form trans-anhydromevalonate 5-phosphate (tAHMP). Involved in the archaeal mevalonate (MVA) pathway, which provides fundamental precursors for isoprenoid biosynthesis, such as isopentenyl diphosphate (IPP) and dimethylallyl diphosphate (DMAPP). This is Phosphomevalonate dehydratase small subunit from Aeropyrum pernix (strain ATCC 700893 / DSM 11879 / JCM 9820 / NBRC 100138 / K1).